A 79-amino-acid polypeptide reads, in one-letter code: UPF0180 protein BCE_1513 (79 aa).

Belongs to the UPF0180 family.

This is UPF0180 protein BCE_1513 from Bacillus cereus (strain ATCC 10987 / NRS 248).